A 194-amino-acid chain; its full sequence is tRNA (mnm(5)s(2)U34)-methyltransferase (194 aa).

Residues histidine 33, aspartate 34, aspartate 52, glutamine 54, serine 79, and histidine 80 each contribute to the S-adenosyl-L-methionine site.

Belongs to the methyltransferase superfamily. MnmM family. Homodimer.

It carries out the reaction 5-aminomethyl-2-thiouridine(34) in tRNA + S-adenosyl-L-methionine = 5-methylaminomethyl-2-thiouridine(34) in tRNA + S-adenosyl-L-homocysteine + H(+). It participates in tRNA modification. Its function is as follows. Involved in the biosynthesis of 5-methylaminomethyl-2-thiouridine (mnm(5)s(2)U) at the wobble position (U34) in tRNA. Catalyzes the transfer of a methyl group from S-adenosyl-L-methionine to nm(5)s(2)U34 to form mnm(5)s(2)U34. The protein is tRNA (mnm(5)s(2)U34)-methyltransferase of Bacillus subtilis (strain 168).